The sequence spans 206 residues: FMN-dependent NADH:quinone oxidoreductase (206 aa).

FMN is bound by residues Ser-10 and Ser-15–Ser-17.

Belongs to the azoreductase type 1 family. In terms of assembly, homodimer. FMN serves as cofactor.

The enzyme catalyses 2 a quinone + NADH + H(+) = 2 a 1,4-benzosemiquinone + NAD(+). It catalyses the reaction N,N-dimethyl-1,4-phenylenediamine + anthranilate + 2 NAD(+) = 2-(4-dimethylaminophenyl)diazenylbenzoate + 2 NADH + 2 H(+). In terms of biological role, quinone reductase that provides resistance to thiol-specific stress caused by electrophilic quinones. Its function is as follows. Also exhibits azoreductase activity. Catalyzes the reductive cleavage of the azo bond in aromatic azo compounds to the corresponding amines. The protein is FMN-dependent NADH:quinone oxidoreductase of Acidobacterium capsulatum (strain ATCC 51196 / DSM 11244 / BCRC 80197 / JCM 7670 / NBRC 15755 / NCIMB 13165 / 161).